We begin with the raw amino-acid sequence, 328 residues long: Phosphate acyltransferase (328 aa).

The protein belongs to the PlsX family. Homodimer. Probably interacts with PlsY.

The protein localises to the cytoplasm. The catalysed reaction is a fatty acyl-[ACP] + phosphate = an acyl phosphate + holo-[ACP]. The protein operates within lipid metabolism; phospholipid metabolism. Functionally, catalyzes the reversible formation of acyl-phosphate (acyl-PO(4)) from acyl-[acyl-carrier-protein] (acyl-ACP). This enzyme utilizes acyl-ACP as fatty acyl donor, but not acyl-CoA. The sequence is that of Phosphate acyltransferase from Geobacillus thermodenitrificans (strain NG80-2).